The primary structure comprises 103 residues: MSCTASYAGMTTPVKDKEGHGIPCLQPIDVVECTYQYFTKSRNKLSLRVGDLIYVLTKGSNGWWDGVLIRHSANNNNNSLILDRGWFPPSFYTVHSKRTTRGA.

Residues 26–97 (QPIDVVECTY…PPSFYTVHSK (72 aa)) enclose the SH3 domain.

This is Putative truncated guanine nucleotide exchange factor YLL017W from Saccharomyces cerevisiae (strain ATCC 204508 / S288c) (Baker's yeast).